We begin with the raw amino-acid sequence, 596 residues long: Succinate dehydrogenase flavoprotein subunit (596 aa).

FAD contacts are provided by residues Gly18–Gly23, Thr41–Gly56, and Asp225. His49 bears the Tele-8alpha-FAD histidine mark. Substrate contacts are provided by His246 and Thr258. The active-site Proton acceptor is Arg290. Position 357 (His357) interacts with substrate. FAD is bound at residue Glu391. Position 402 (Arg402) interacts with substrate. Residue Ser407–Leu408 coordinates FAD.

The protein belongs to the FAD-dependent oxidoreductase 2 family. FRD/SDH subfamily. In terms of assembly, part of an enzyme complex containing four subunits: a flavoprotein, an iron-sulfur, cytochrome b-556, and a hydrophobic anchor protein. FAD is required as a cofactor.

The protein resides in the cell inner membrane. The enzyme catalyses a quinone + succinate = fumarate + a quinol. It participates in carbohydrate metabolism; tricarboxylic acid cycle; fumarate from succinate (bacterial route): step 1/1. The chain is Succinate dehydrogenase flavoprotein subunit (sdhA) from Rickettsia felis (strain ATCC VR-1525 / URRWXCal2) (Rickettsia azadi).